The sequence spans 385 residues: 8-amino-7-oxononanoate synthase (385 aa).

Arg-21 serves as a coordination point for substrate. Position 108–109 (108–109 (GF)) interacts with pyridoxal 5'-phosphate. Residue His-133 participates in substrate binding. Residues Ser-179, His-207, and Thr-233 each contribute to the pyridoxal 5'-phosphate site. An N6-(pyridoxal phosphate)lysine modification is found at Lys-236. Thr-352 serves as a coordination point for substrate.

The protein belongs to the class-II pyridoxal-phosphate-dependent aminotransferase family. BioF subfamily. Homodimer. The cofactor is pyridoxal 5'-phosphate.

It carries out the reaction 6-carboxyhexanoyl-[ACP] + L-alanine + H(+) = (8S)-8-amino-7-oxononanoate + holo-[ACP] + CO2. It functions in the pathway cofactor biosynthesis; biotin biosynthesis. Catalyzes the decarboxylative condensation of pimeloyl-[acyl-carrier protein] and L-alanine to produce 8-amino-7-oxononanoate (AON), [acyl-carrier protein], and carbon dioxide. In Salmonella choleraesuis (strain SC-B67), this protein is 8-amino-7-oxononanoate synthase.